We begin with the raw amino-acid sequence, 173 residues long: ATP synthase subunit b (173 aa).

The helical transmembrane segment at 15-35 (LYVGDMLFYAILFIVLMALIA) threads the bilayer.

The protein belongs to the ATPase B chain family. F-type ATPases have 2 components, F(1) - the catalytic core - and F(0) - the membrane proton channel. F(1) has five subunits: alpha(3), beta(3), gamma(1), delta(1), epsilon(1). F(0) has three main subunits: a(1), b(2) and c(10-14). The alpha and beta chains form an alternating ring which encloses part of the gamma chain. F(1) is attached to F(0) by a central stalk formed by the gamma and epsilon chains, while a peripheral stalk is formed by the delta and b chains.

Its subcellular location is the cell membrane. In terms of biological role, f(1)F(0) ATP synthase produces ATP from ADP in the presence of a proton or sodium gradient. F-type ATPases consist of two structural domains, F(1) containing the extramembraneous catalytic core and F(0) containing the membrane proton channel, linked together by a central stalk and a peripheral stalk. During catalysis, ATP synthesis in the catalytic domain of F(1) is coupled via a rotary mechanism of the central stalk subunits to proton translocation. Its function is as follows. Component of the F(0) channel, it forms part of the peripheral stalk, linking F(1) to F(0). In Pediococcus pentosaceus (strain ATCC 25745 / CCUG 21536 / LMG 10740 / 183-1w), this protein is ATP synthase subunit b.